The chain runs to 378 residues: Putative zinc finger protein 302L (378 aa).

The C2H2-type; degenerate zinc-finger motif lies at isoleucine 3–lysine 25.

It belongs to the IIV-6 302L family.

The protein is Putative zinc finger protein 302L of Invertebrate iridescent virus 6 (IIV-6).